The chain runs to 138 residues: Large ribosomal subunit protein uL16 (138 aa).

A compositionally biased stretch (basic residues) spans 1 to 17; it reads MLIPRKVKHRKQHHPRQ. The tract at residues 1–22 is disordered; it reads MLIPRKVKHRKQHHPRQRGIAS.

The protein belongs to the universal ribosomal protein uL16 family. As to quaternary structure, part of the 50S ribosomal subunit.

Its function is as follows. Binds 23S rRNA and is also seen to make contacts with the A and possibly P site tRNAs. This Mycobacterium leprae (strain Br4923) protein is Large ribosomal subunit protein uL16.